The primary structure comprises 662 residues: Protein associated with UVRAG as autophagy enhancer (662 aa).

2 disordered regions span residues 1-34 (MVSQ…RLLN) and 58-131 (DVQQ…SLSS). Residues 58–71 (DVQQQPQDLQSQVP) show a composition bias toward low complexity. Residues 100–113 (AETTLSEDTTDSVG) are compositionally biased toward polar residues. The span at 114 to 131 (SASPHGSSEKSSSFSLSS) shows a compositional bias: low complexity. The residue at position 157 (Ser157) is a Phosphoserine; by MTOR. The interval 196–235 (EVFVLPVDVEKENAHFYVADMIISAMEKMKCNILSQQQTE) is interaction with UVRAG. N6-acetyllysine occurs at positions 483, 523, 533, 573, and 633.

Interacts with UVRAG; the interaction is direct and promotes association with the PI3K/PI3KC3 and HOPS complexes. Interacts with STX17. Post-translationally, phosphorylated by MTOR at Ser-157 under nutrient-rich conditions. Phosphorylation prevents acetylation by KAT5/TIP60 and impairs RUBCNL/PACER function and autophagosome maturation. Under autophagy induction, Phosphorylation by MTOR is repressed, enabling acetylation by KAT5/TIP60. In terms of processing, acetylated by KAT5/TIP60 under autophagy induction, promoting autophagosome maturation and lipid metabolism. Acetylation is prevented by phosphorylation by MTOR. Lys-483 and Lys-573 constitute the key sites for tuning function in autophagy. In terms of tissue distribution, expressed weakly in cervical carcinoma cell lines.

It localises to the cytoplasmic vesicle. Its subcellular location is the autophagosome membrane. Functionally, regulator of autophagy that promotes autophagosome maturation by facilitating the biogenesis of phosphatidylinositol 3-phosphate (PtdIns(3)P) in late steps of autophagy. Acts by antagonizing RUBCN, thereby stimulating phosphatidylinositol 3-kinase activity of the PI3K/PI3KC3 complex. Following anchorage to the autophagosomal SNARE STX17, promotes the recruitment of PI3K/PI3KC3 and HOPS complexes to the autophagosome to regulate the fusion specificity of autophagosomes with late endosomes/lysosomes. Binds phosphoinositides phosphatidylinositol 3-phosphate (PtdIns(3)P), 4-phosphate (PtdIns(4)P) and 5-phosphate (PtdIns(5)P). In addition to its role in autophagy, acts as a regulator of lipid and glycogen homeostasis. May act as a tumor suppressor. This chain is Protein associated with UVRAG as autophagy enhancer, found in Homo sapiens (Human).